A 283-amino-acid polypeptide reads, in one-letter code: Pantothenate synthetase (283 aa).

ATP is bound at residue 26 to 33 (MGNLHEGH). The active-site Proton donor is H33. Q57 serves as a coordination point for (R)-pantoate. Q57 lines the beta-alanine pocket. 144–147 (GKKD) contacts ATP. Q150 provides a ligand contact to (R)-pantoate. Residues V173 and 181 to 184 (LSSR) each bind ATP.

It belongs to the pantothenate synthetase family. Homodimer.

The protein resides in the cytoplasm. It catalyses the reaction (R)-pantoate + beta-alanine + ATP = (R)-pantothenate + AMP + diphosphate + H(+). It participates in cofactor biosynthesis; (R)-pantothenate biosynthesis; (R)-pantothenate from (R)-pantoate and beta-alanine: step 1/1. Its function is as follows. Catalyzes the condensation of pantoate with beta-alanine in an ATP-dependent reaction via a pantoyl-adenylate intermediate. This Ralstonia pickettii (strain 12J) protein is Pantothenate synthetase.